The chain runs to 858 residues: Selenocysteine insertion sequence-binding protein 2 (858 aa).

3 disordered regions span residues 127–261 (KPRH…GDVG), 275–296 (SDHT…CTQE), and 327–625 (LKKT…DSAT). Composition is skewed to basic and acidic residues over residues 147–166 (KPSD…RRAD), 188–197 (SSLKSDGYHK), and 215–224 (PEFEFSRLDF). 2 stretches are compositionally biased toward polar residues: residues 281-296 (AVTS…CTQE) and 327-352 (LKKT…NPSY). The Nuclear localization signal motif lies at 380–387 (KNKKKKEK). Over residues 418–429 (RRHRGQSPKLHS) the composition is skewed to basic residues. Positions 430–447 (KQQTQNEFKTSGKKSQVP) are enriched in polar residues. Positions 539–548 (ILKERQERMQ) are enriched in basic and acidic residues. Polar residues-rich tracts occupy residues 554–563 (SAVSLTVASD) and 571–582 (GASNQTPSQDNP). The interval 678–699 (LVLGLREVLKHLKLRKLKCIII) is RNA-binding. The interval 785–819 (MRQEQAGEPGPQSPPSPPMQDPIPSTEEGTLPSTG) is disordered. The span at 795–805 (PQSPPSPPMQD) shows a compositional bias: pro residues.

The protein resides in the cytoplasm. Its subcellular location is the nucleus. Its function is as follows. mRNA-binding protein that binds to the SECIS (selenocysteine insertion sequence) element present in the 3'-UTR of mRNAs encoding selenoproteins and facilitates the incorporation of the rare amino acid selenocysteine. Insertion of selenocysteine at UGA codons is mediated by SECISBP2 and EEFSEC: SECISBP2 (1) specifically binds the SECIS sequence once the 80S ribosome encounters an in-frame UGA codon and (2) contacts the RPS27A/eS31 of the 40S ribosome before ribosome stalling. (3) GTP-bound EEFSEC then delivers selenocysteinyl-tRNA(Sec) to the 80S ribosome and adopts a preaccommodated state conformation. (4) After GTP hydrolysis, EEFSEC dissociates from the assembly, selenocysteinyl-tRNA(Sec) accommodates, and peptide bond synthesis and selenoprotein elongation occur. The sequence is that of Selenocysteine insertion sequence-binding protein 2 from Mus musculus (Mouse).